The sequence spans 910 residues: Leucine--tRNA ligase (910 aa).

A 'HIGH' region motif is present at residues 42 to 52; sequence PYPSGKLHMGH. The 'KMSKS' region signature appears at 658 to 662; it reads TMSKS. ATP is bound at residue Lys661.

Belongs to the class-I aminoacyl-tRNA synthetase family.

It is found in the cytoplasm. It catalyses the reaction tRNA(Leu) + L-leucine + ATP = L-leucyl-tRNA(Leu) + AMP + diphosphate. The chain is Leucine--tRNA ligase from Acidovorax sp. (strain JS42).